A 131-amino-acid polypeptide reads, in one-letter code: D-ribose pyranase (131 aa).

Catalysis depends on H20, which acts as the Proton donor. Residues D28, H98, and 120–122 (YSN) contribute to the substrate site.

This sequence belongs to the RbsD / FucU family. RbsD subfamily. As to quaternary structure, homodecamer.

Its subcellular location is the cytoplasm. The catalysed reaction is beta-D-ribopyranose = beta-D-ribofuranose. The protein operates within carbohydrate metabolism; D-ribose degradation; D-ribose 5-phosphate from beta-D-ribopyranose: step 1/2. Catalyzes the interconversion of beta-pyran and beta-furan forms of D-ribose. This is D-ribose pyranase from Limosilactobacillus fermentum (strain NBRC 3956 / LMG 18251) (Lactobacillus fermentum).